A 297-amino-acid polypeptide reads, in one-letter code: Phosphatidylserine decarboxylase proenzyme (297 aa).

Residues D92, H149, and S254 each act as charge relay system; for autoendoproteolytic cleavage activity in the active site. The active-site Schiff-base intermediate with substrate; via pyruvic acid; for decarboxylase activity is the S254. S254 bears the Pyruvic acid (Ser); by autocatalysis mark.

The protein belongs to the phosphatidylserine decarboxylase family. PSD-B subfamily. Prokaryotic type I sub-subfamily. In terms of assembly, heterodimer of a large membrane-associated beta subunit and a small pyruvoyl-containing alpha subunit. Requires pyruvate as cofactor. Is synthesized initially as an inactive proenzyme. Formation of the active enzyme involves a self-maturation process in which the active site pyruvoyl group is generated from an internal serine residue via an autocatalytic post-translational modification. Two non-identical subunits are generated from the proenzyme in this reaction, and the pyruvate is formed at the N-terminus of the alpha chain, which is derived from the carboxyl end of the proenzyme. The autoendoproteolytic cleavage occurs by a canonical serine protease mechanism, in which the side chain hydroxyl group of the serine supplies its oxygen atom to form the C-terminus of the beta chain, while the remainder of the serine residue undergoes an oxidative deamination to produce ammonia and the pyruvoyl prosthetic group on the alpha chain. During this reaction, the Ser that is part of the protease active site of the proenzyme becomes the pyruvoyl prosthetic group, which constitutes an essential element of the active site of the mature decarboxylase.

It is found in the cell membrane. It catalyses the reaction a 1,2-diacyl-sn-glycero-3-phospho-L-serine + H(+) = a 1,2-diacyl-sn-glycero-3-phosphoethanolamine + CO2. It participates in phospholipid metabolism; phosphatidylethanolamine biosynthesis; phosphatidylethanolamine from CDP-diacylglycerol: step 2/2. Functionally, catalyzes the formation of phosphatidylethanolamine (PtdEtn) from phosphatidylserine (PtdSer). This Bordetella parapertussis (strain 12822 / ATCC BAA-587 / NCTC 13253) protein is Phosphatidylserine decarboxylase proenzyme.